The following is a 561-amino-acid chain: Laccase-1 (561 aa).

The signal sequence occupies residues 1-20; it reads MKNSFFSSLAKFASLSLAFA. Plastocyanin-like domains follow at residues 68–185 and 191–337; these read VVQN…GPAT and DLGM…YTGS. N-linked (GlcNAc...) asparagine glycosylation is found at Asn-71, Asn-87, and Asn-114. Positions 119, 121, 163, and 165 each coordinate Cu cation. Residues Cys-140 and Cys-542 are joined by a disulfide bond. Asn-226, Asn-284, Asn-327, Asn-391, and Asn-398 each carry an N-linked (GlcNAc...) asparagine glycan. The region spanning 396–525 is the Plastocyanin-like 3 domain; it reads LLNWTDPTLL…ALQFVESESS (130 aa). Residues His-445, His-448, His-450, His-504, Cys-505, His-506, and His-510 each coordinate Cu cation.

This sequence belongs to the multicopper oxidase family. It depends on Cu cation as a cofactor.

It is found in the secreted. It carries out the reaction 4 hydroquinone + O2 = 4 benzosemiquinone + 2 H2O. Functionally, lignin degradation and detoxification of lignin-derived products. The chain is Laccase-1 (lcc1) from Botryotinia fuckeliana (Noble rot fungus).